The following is a 456-amino-acid chain: N(6)-adenosine-methyltransferase non-catalytic subunit METTL14 (456 aa).

The disordered stretch occupies residues 43–74 (EIAETRETSRASYDTSAAVSKRKLPEEGKADE). Over residues 65 to 74 (KLPEEGKADE) the composition is skewed to basic and acidic residues. Interaction with METTL3 regions lie at residues 135-136 (RD) and 237-238 (SG). Residues 245–254 (RMCLRKWGFR) are positively charged region required for RNA-binding. 2 interaction with METTL3 regions span residues 255 to 258 (RSED) and 278 to 287 (KAIFQRTKEH). The interval 297 to 298 (HR) is positively charged region required for RNA-binding. Residues 308–312 (NVDID) form an interaction with METTL3 region. The segment at 395 to 456 (LRPKTPPPKS…GPHRGVFAPR (62 aa)) is disordered. Positions 410–421 (ASRGGGRGGASA) are enriched in gly residues. Residues 423 to 441 (RGERGRERNRGSFRGDRGN) show a composition bias toward basic and acidic residues.

Belongs to the MT-A70-like family. In terms of assembly, heterodimer; heterodimerizes with mettl3 to form an antiparallel heterodimer that constitutes an active methyltransferase. Component of the WMM complex, a N6-methyltransferase complex composed of a catalytic subcomplex, named MAC, and of an associated subcomplex, named MACOM. The MAC subcomplex is composed of mettl3 and mettl14.

Its subcellular location is the nucleus. In terms of biological role, the METTL3-METTL14 heterodimer forms a N6-methyltransferase complex that methylates adenosine residues at the N(6) position of some mRNAs and regulates the circadian clock, differentiation of embryonic stem cells and cortical neurogenesis. In the heterodimer formed with mettl3, mettl14 constitutes the RNA-binding scaffold that recognizes the substrate rather than the catalytic core. N6-methyladenosine (m6A), which takes place at the 5'-[AG]GAC-3' consensus sites of some mRNAs, plays a role in mRNA stability and processing. The chain is N(6)-adenosine-methyltransferase non-catalytic subunit METTL14 (mettl14) from Xenopus laevis (African clawed frog).